The following is a 210-amino-acid chain: Prolactin-2 (210 aa).

Residues 1 to 23 (MARRSQGTKLHLAVLCLVVSCHA) form the signal peptide. 2 disulfide bridges follow: C69-C183 and C200-C210.

This sequence belongs to the somatotropin/prolactin family.

Its subcellular location is the secreted. This Oncorhynchus tshawytscha (Chinook salmon) protein is Prolactin-2 (prl2).